The sequence spans 115 residues: UPF0102 protein NGO_1987 (115 aa).

The protein belongs to the UPF0102 family.

This chain is UPF0102 protein NGO_1987, found in Neisseria gonorrhoeae (strain ATCC 700825 / FA 1090).